We begin with the raw amino-acid sequence, 200 residues long: BREX protein BrxB (200 aa).

It belongs to the BrxB family.

Its function is as follows. BREX systems (bacteriophage exclusion) provide immunity against bacteriophage. Part of a type 1 BREX system which protects against dsDNA phage. This system allows phage adsorption but prevents phage DNA replication, without degradation of the phage DNA. Methylation of bacterial DNA by PglX guides self/non-self discrimination. When the brxA-brxB-brxC-pglX-pglZ-brxL genes are transformed into a susceptible E.coli strain (BW25113) they confer very high resistance to infection by bacteriophage VR7 and VpaE1, about 100-fold protection against lambda, T5 and T7 and no protection against RNA phage Qbeta, ssDNA phage M13 or dSDNA phage T4 and VR5. Glycosylated phage DNA is not susceptible to BREX. The BREX system does not confer resistance to lysogenic lambda phage, i.e. prophage that are integrated into the chromosomal DNA and then induced to form phage. The chain is BREX protein BrxB from Escherichia coli O9:H4 (strain HS).